We begin with the raw amino-acid sequence, 475 residues long: Siroheme synthase (475 aa).

The precorrin-2 dehydrogenase /sirohydrochlorin ferrochelatase stretch occupies residues 1-204 (MDYLPVFLNI…GRDQAAQDYL (204 aa)). NAD(+) contacts are provided by residues 22–23 (EI) and 43–44 (PA). The residue at position 129 (Ser129) is a Phosphoserine. Positions 218-475 (GEVYLVGAGP…MGTSSGPGYP (258 aa)) are uroporphyrinogen-III C-methyltransferase. Pro227 lines the S-adenosyl-L-methionine pocket. Asp250 functions as the Proton acceptor in the catalytic mechanism. The active-site Proton donor is the Lys272. Residues 303–305 (GGD), Ile308, 333–334 (TA), Met385, and Gly414 each bind S-adenosyl-L-methionine.

In the N-terminal section; belongs to the precorrin-2 dehydrogenase / sirohydrochlorin ferrochelatase family. This sequence in the C-terminal section; belongs to the precorrin methyltransferase family.

It carries out the reaction uroporphyrinogen III + 2 S-adenosyl-L-methionine = precorrin-2 + 2 S-adenosyl-L-homocysteine + H(+). It catalyses the reaction precorrin-2 + NAD(+) = sirohydrochlorin + NADH + 2 H(+). The enzyme catalyses siroheme + 2 H(+) = sirohydrochlorin + Fe(2+). It functions in the pathway cofactor biosynthesis; adenosylcobalamin biosynthesis; precorrin-2 from uroporphyrinogen III: step 1/1. The protein operates within cofactor biosynthesis; adenosylcobalamin biosynthesis; sirohydrochlorin from precorrin-2: step 1/1. Its pathway is porphyrin-containing compound metabolism; siroheme biosynthesis; precorrin-2 from uroporphyrinogen III: step 1/1. It participates in porphyrin-containing compound metabolism; siroheme biosynthesis; siroheme from sirohydrochlorin: step 1/1. It functions in the pathway porphyrin-containing compound metabolism; siroheme biosynthesis; sirohydrochlorin from precorrin-2: step 1/1. In terms of biological role, multifunctional enzyme that catalyzes the SAM-dependent methylations of uroporphyrinogen III at position C-2 and C-7 to form precorrin-2 via precorrin-1. Then it catalyzes the NAD-dependent ring dehydrogenation of precorrin-2 to yield sirohydrochlorin. Finally, it catalyzes the ferrochelation of sirohydrochlorin to yield siroheme. The protein is Siroheme synthase of Nitrosomonas europaea (strain ATCC 19718 / CIP 103999 / KCTC 2705 / NBRC 14298).